The chain runs to 485 residues: MATTTSKTNTGYVTQVIGPVLDVSFPNGQLPKIYNAITVKGKNEAGQDITVTCEVQQLLGDNQVRAVSMSTTDGILRGMEVTDSGAAISVPVGTPTLGRIFNVLGEPVDELGAVVCDSTLPIHRPSPAFTQLETKSSIFETGIKVVDLLAPYRRGGKIGLFGGAGVGKTVLIMELINNIAKAHGGVSVFGGVGERTREGNDLYQEMKESKVIDENNLPASKVALVYGQMNEPPGARMRVALTALTMAEYFRDVNNQDVLLFIDNIFRFVQAGSEVSALLGRMPSAVGYQPTLGTEMGSLQERITSTTKGSITSIQAVYVPADDLTDPAPATTFAHLDATTVLSRNLAAKGIYPAVDPLDSTSTMLQPGIVGEKHYACAQRVKGILQRYKELQDIISILGLDELSEDDRLAVARARRVERFLSQPFFVAEVFTGSPGKYVSLEDTIKGFTMILDGELDELPEQSFYLVGDIQEAISKGQKLLAEAK.

ATP is bound at residue 162–169; the sequence is GGAGVGKT.

Belongs to the ATPase alpha/beta chains family. As to quaternary structure, F-type ATPases have 2 components, CF(1) - the catalytic core - and CF(0) - the membrane proton channel. CF(1) has five subunits: alpha(3), beta(3), gamma(1), delta(1), epsilon(1). CF(0) has four main subunits: a(1), b(1), b'(1) and c(9-12).

The protein resides in the plastid. It localises to the cyanelle thylakoid membrane. It catalyses the reaction ATP + H2O + 4 H(+)(in) = ADP + phosphate + 5 H(+)(out). In terms of biological role, produces ATP from ADP in the presence of a proton gradient across the membrane. The catalytic sites are hosted primarily by the beta subunits. The sequence is that of ATP synthase subunit beta, cyanelle from Cyanophora paradoxa.